We begin with the raw amino-acid sequence, 196 residues long: uncharacterized protein (196 aa).

Residues 11–31 (ICGFLLVILTIGGVLGGVYLV) form a helical membrane-spanning segment.

It localises to the membrane. This is an uncharacterized protein from Mycoplasma genitalium (strain ATCC 33530 / DSM 19775 / NCTC 10195 / G37) (Mycoplasmoides genitalium).